A 152-amino-acid chain; its full sequence is Large ribosomal subunit protein bL9 (152 aa).

The protein belongs to the bacterial ribosomal protein bL9 family.

Its function is as follows. Binds to the 23S rRNA. The protein is Large ribosomal subunit protein bL9 of Prochlorococcus marinus (strain MIT 9211).